A 277-amino-acid chain; its full sequence is Tryptophan synthase alpha chain (277 aa).

Catalysis depends on proton acceptor residues glutamate 59 and aspartate 70.

Belongs to the TrpA family. As to quaternary structure, tetramer of two alpha and two beta chains.

It carries out the reaction (1S,2R)-1-C-(indol-3-yl)glycerol 3-phosphate + L-serine = D-glyceraldehyde 3-phosphate + L-tryptophan + H2O. The protein operates within amino-acid biosynthesis; L-tryptophan biosynthesis; L-tryptophan from chorismate: step 5/5. The alpha subunit is responsible for the aldol cleavage of indoleglycerol phosphate to indole and glyceraldehyde 3-phosphate. This Streptomyces avermitilis (strain ATCC 31267 / DSM 46492 / JCM 5070 / NBRC 14893 / NCIMB 12804 / NRRL 8165 / MA-4680) protein is Tryptophan synthase alpha chain.